A 1687-amino-acid polypeptide reads, in one-letter code: A-kinase anchor protein 12 (1687 aa).

The tract at residues 1-108 is disordered; the sequence is MGAGSSTEQR…EKDRVEEMAA (108 aa). G2 is lipidated: N-myristoyl glycine. 4 positions are modified to phosphoserine: S11, S18, S22, and S27. A compositionally biased stretch (low complexity) spans 30-48; sequence GPAAEASGAAGDPADADPA. Residues 52–62 show a composition bias toward polar residues; the sequence is PQKNGQLSTVN. Over residues 75 to 88 the composition is skewed to acidic residues; sequence ENQEGQEEEVVDED. Residues 89–105 are compositionally biased toward basic and acidic residues; the sequence is VGQRESEDVREKDRVEE. A phosphoserine mark is found at S136 and S204. Disordered stretches follow at residues 175-282 and 298-355; these read SDTV…ETTS and KTSF…DYEK. Basic and acidic residues predominate over residues 213-230; it reads ASKESELKQSTEKQEGTL. Residues S235 and S245 each carry the phosphoserine modification. Acidic residues predominate over residues 247–259; the sequence is QAAEEEAKDEGEE. The interval 254–544 is involved in PKC-binding; sequence KDEGEEKQEK…QHIHTESPES (291 aa). Phosphoserine is present on residues S268, S271, S274, and S304. Positions 268–282 are enriched in low complexity; sequence SPESPSSPVSSETTS. Over residues 303 to 321 the composition is skewed to basic and acidic residues; the sequence is KSKEDDLETAEKRKEQEAE. Residue T331 is modified to Phosphothreonine. A compositionally biased stretch (acidic residues) spans 334-344; it reads ASEEQEPAEDT. 2 positions are modified to phosphoserine: S335 and S350. At Y353 the chain carries Phosphotyrosine. The residue at position 371 (S371) is a Phosphoserine. The disordered stretch occupies residues 402–481; that stretch reads VEKTEEEQGG…EKTLPKHPEG (80 aa). The segment covering 417–426 has biased composition (low complexity); that stretch reads GGVVVEGTGE. Residue S469 is modified to Phosphoserine. A compositionally biased stretch (basic and acidic residues) spans 470 to 480; the sequence is PEEKTLPKHPE. S491, S507, and S509 each carry phosphoserine. The disordered stretch occupies residues 496-828; that stretch reads KVQGSPLKKL…INEDDPDVPA (333 aa). The segment covering 499 to 513 has biased composition (low complexity); it reads GSPLKKLFSSSGLKK. Positions 514 to 523 are enriched in basic residues; it reads LSGKKQKGKR. A compositionally biased stretch (basic and acidic residues) spans 533–550; it reads EYQHIHTESPESADEQKG. 6 positions are modified to phosphoserine: S541, S544, S585, S599, S614, and S616. Residues 594–614 carry the AKAP CaM-binding 1 motif; it reads ITPWASFKKMVTPKKRVRRPS. The segment covering 612 to 626 has biased composition (basic and acidic residues); sequence RPSESDKEEELEKVK. Residues 628–639 show a composition bias toward polar residues; the sequence is ATLSSTDSTVSE. T629 carries the phosphothreonine modification. S631, S632, S635, and S638 each carry phosphoserine. Basic and acidic residues predominate over residues 642–661; that stretch reads DEVKTVGEEQKPEEPKRRVD. Phosphoserine is present on residues S683, S684, and S685. Basic and acidic residues predominate over residues 697 to 711; it reads DSHRAEEASKDKEAG. Positions 717-726 are enriched in polar residues; that stretch reads ASTQEQDQAQ. Low complexity predominate over residues 727 to 744; the sequence is GSSSPEPAGSPSEGEGVS. S736, S748, S770, S771, and S789 each carry phosphoserine. The AKAP CaM-binding 2 signature appears at 743–763; the sequence is VSTWESFKRLVTPRKKSKSKL. The AKAP CaM-binding 3 motif lies at 784-804; the sequence is EESWVSIKKFIPGRRKKRADG. Phosphothreonine is present on T871. Residue S873 is modified to Phosphoserine. The disordered stretch occupies residues 959–981; the sequence is ETSEALRTEEVTEASGAEETTDM. Residue K1030 forms a Glycyl lysine isopeptide (Lys-Gly) (interchain with G-Cter in SUMO1) linkage. The segment covering 1035–1045 has biased composition (polar residues); sequence VPATQTVQRTG. Disordered stretches follow at residues 1035–1105, 1125–1221, 1277–1361, and 1443–1487; these read VPAT…EVTA, AVAP…LAAA, CQEK…QDKA, and TPAP…TAIE. Phosphoserine is present on S1059. Over residues 1130–1157 the composition is skewed to polar residues; sequence SSETLTDSETNGSTPLADSDTADGTQQD. A compositionally biased stretch (basic and acidic residues) spans 1199–1211; the sequence is QEEHGEEPGRDVL. S1289 carries the phosphoserine modification. Positions 1298-1310 are enriched in basic and acidic residues; the sequence is DVEKEKRETKPEQ. Phosphoserine occurs at positions 1348, 1352, and 1354. The span at 1462-1487 shows a compositional bias: basic and acidic residues; that stretch reads QRERSEEEDKPDAGPDADGKESTAIE. An RII-binding region spans residues 1498–1511; that stretch reads ELESKSNKIVLNVI. Disordered regions lie at residues 1522–1582 and 1599–1687; these read ETAP…GSAS and IEKL…LAES. Polar residues predominate over residues 1530–1547; that stretch reads YDSQTQVPAMQADSQGAQ. Phosphoserine occurs at positions 1543 and 1571. A compositionally biased stretch (low complexity) spans 1618–1630; it reads QLQSLAQAEASAS. Phosphoserine is present on S1637. Residues 1645-1687 are compositionally biased toward basic and acidic residues; the sequence is LTEEGDAPKVEVQEEEMSTKSVKENKAQAEEDLQEPKGDLAES.

As to quaternary structure, binds to dimeric RII-alpha regulatory subunit of PKC. Phosphorylated by PKC (in vitro).

Its subcellular location is the cytoplasm. The protein localises to the cytoskeleton. It is found in the membrane. In terms of biological role, anchoring protein that mediates the subcellular compartmentation of protein kinase A (PKA) and protein kinase C (PKC). In Rattus norvegicus (Rat), this protein is A-kinase anchor protein 12 (Akap12).